We begin with the raw amino-acid sequence, 893 residues long: POU domain protein 2, isoform B (893 aa).

Residues 586–668 are disordered; that stretch reads QMKQQQREDP…STPKPTSGLT (83 aa). A compositionally biased stretch (low complexity) spans 602–617; sequence PLAKSPLRSPSLSPVP. Polar residues predominate over residues 623 to 646; the sequence is QQRTPPNSMTANSLGMSSAVMTPN. Over residues 647-665 the composition is skewed to low complexity; the sequence is TPSMQQQPQLQQSTPKPTS. Positions 681 to 755 constitute a POU-specific domain; that stretch reads EETTDLEELE…LLQKWLEDAD (75 aa). The segment at residues 786 to 845 is a DNA-binding region (homeobox); it reads RRKKRTSIETTVRTTLEKAFLMNCKPTSEEISQLSERLNMDKEVIRVWFCNRRQKEKRIN.

This sequence belongs to the POU transcription factor family. Class-2 subfamily. As to expression, initial expression in cellular blastoderm stage, then in ectodermal stripes during germband extension. Broad expression in the neuroectoderm followed by limitation to discrete subsets of CNS cells, and expression in specific PNS neurons and support cells.

The protein resides in the nucleus. Functionally, DNA-binding regulatory protein implicated in early development. Involved in neuronal cell fate decision. May act as an octamer-dependent activator of transcription. Could also play an early role in specific ectodermal cells, and a subsequent role in the embryonic nervous system. This is POU domain protein 2, isoform B from Drosophila melanogaster (Fruit fly).